The chain runs to 976 residues: Dolichyl-phosphooligosaccharide-protein glycotransferase 1 (976 aa).

At 1 to 21 (MVKSKVKKVEKGKEGEEKRST) the chain is on the cytoplasmic side. The helical transmembrane segment at 22–42 (YVLLKKVLIPILVFGFAIYAF) threads the bilayer. The Extracellular portion of the chain corresponds to 43–112 (YLRHLTAGKY…KVVSLFGYNE (70 aa)). A DXD motif 1 motif is present at residues 55–57 (DPD). Position 57 (aspartate 57) interacts with Mn(2+). Residues 113 to 133 (LQAFLLWPPFVGFLGVIAVYL) form a helical membrane-spanning segment. Topologically, residues 134 to 135 (LG) are cytoplasmic. Residues 136 to 156 (RKVLNEWTGLWGAVVLTVSTA) form a helical membrane-spanning segment. At 157–165 (NFSRTFSGN) the chain is on the extracellular side. The helical transmembrane segment at 166-186 (ARGDGPFMALFIFASVAMLYY) threads the bilayer. 2 residues coordinate Mn(2+): arginine 167 and aspartate 169. Residues 167-169 (RGD) carry the DXD motif 2 motif. Over 187-193 (LKESNKT) the chain is Cytoplasmic. A helical membrane pass occupies residues 194-214 (RKIIYGTLFVLLTVISLGAWN). Glycine 215 is a topological domain (extracellular). A helical membrane pass occupies residues 216–236 (SPFGLMVLLGFASLQTIILFI). Topologically, residues 237–247 (FGKLEELKKFV) are cytoplasmic. Residues 248 to 268 (KEFYPAYLAILAFGYALTFPG) form a helical membrane-spanning segment. A topological domain (extracellular) is located at residue isoleucine 269. Residues 270-290 (VKIGGFIRFAFEVFLGLIFLL) form a helical membrane-spanning segment. Topologically, residues 291 to 306 (VIMLYGGRYLNYSDKK) are cytoplasmic. The chain crosses the membrane as a helical span at residues 307-327 (HRFLVVTIIVLLGFGGAYAYV). Residues 328–360 (GPKLFRLMGGAYQSTQVYETVQELAKTTIGDVK) are Extracellular-facing. Positions 347–350 (TVQE) match the TIXE motif motif. The helical transmembrane segment at 361–381 (AYYGVESGNGLIFFLSIPGLL) threads the bilayer. Topologically, residues 382-396 (ILLTKYLYDLFKKAK) are cytoplasmic. The chain crosses the membrane as a helical span at residues 397–417 (SDNETLFALVFYTMSLYLLYL). Residue alanine 418 is a topological domain, extracellular. A helical membrane pass occupies residues 419-439 (VRFLFLASYAVALFFGIFIGF). Arginine 420 provides a ligand contact to a glycophospholipid. Residues 440–453 (SMDVIEKMKENIGI) are Cytoplasmic-facing. A helical membrane pass occupies residues 454–474 (KAALGIVLSLMILVIPFVHAP). The Extracellular segment spans residues 475-976 (VLARSARALK…SASAPHHSSE (502 aa)). The interval 513-515 (WWD) is interacts with target acceptor peptide in protein substrate. Positions 513-517 (WWDYG) match the WWDYG motif motif. Tyrosine 518 contacts a glycophospholipid. The DK motif motif lies at 573–580 (DWAKFNAI).

The protein belongs to the STT3 family. Mn(2+) serves as cofactor. It depends on Mg(2+) as a cofactor.

Its subcellular location is the cell membrane. The catalysed reaction is an archaeal dolichyl phosphooligosaccharide + [protein]-L-asparagine = an archaeal dolichyl phosphate + a glycoprotein with the oligosaccharide chain attached by N-beta-D-glycosyl linkage to a protein L-asparagine.. It functions in the pathway protein modification; protein glycosylation. Functionally, oligosaccharyl transferase (OST) that catalyzes the initial transfer of a defined glycan (ManNAcXyl(2)GlcAMan(2)GalNAc in Pyrococcus) from the lipid carrier dolichol-monophosphate to an asparagine residue within an Asn-X-Ser/Thr consensus motif in nascent polypeptide chains, the first step in protein N-glycosylation. The polypeptide is Dolichyl-phosphooligosaccharide-protein glycotransferase 1 (aglB1) (Pyrococcus horikoshii (strain ATCC 700860 / DSM 12428 / JCM 9974 / NBRC 100139 / OT-3)).